Here is a 362-residue protein sequence, read N- to C-terminus: Heat-inducible transcription repressor HrcA (362 aa).

It belongs to the HrcA family.

In terms of biological role, negative regulator of class I heat shock genes (grpE-dnaK-dnaJ and groELS operons). Prevents heat-shock induction of these operons. The sequence is that of Heat-inducible transcription repressor HrcA from Rhizobium rhizogenes (strain K84 / ATCC BAA-868) (Agrobacterium radiobacter).